Here is a 695-residue protein sequence, read N- to C-terminus: MNLEKVRNIGISAHIDSGKTTLSERILFYSGRIHKIEDVRGGGDGATMDHMELEKERGITITSAATSVTHNGYHINLIDTPGHVDFTVEVERSLRVLDGAVLVLCSVGGVQSQSITVDRQMKRYQIPRLAFINKMDRTGANPRRVVEQLREKLGADAFLAQIPIGAEENFRGVVDLIEMVAYTFEGDQGEKVVTGEIPADLKDEAEEARVAMLDSLSNYSDEVMELLLSEEEVSKDMIYRVMREAVLNGATPVYMGSAYKNKGVQPLLNAVTQYLPSPLDREIYGRDPSDEEKKIELSPDPDKPFVGMAFKIVEDPFGQLTFMRIYQGTIKKGEAYTNQRSQKKERFSRIVRMHSEKRDEIDEAGPGDIIAVMGIDCASGDTYCSERDYATLESMYVPEPVIKIAVNPLNRGDGDKMSKALQRFRKEDPTFSVYTDEETNEILISGMGELHLEIYIERIRREYGVEIEVGAPKVSYRESPTREVEFNYKHKKQTGGSGQYAHIVGKLIPIESESEDSFEFEEKVVGGRIPKQYIPAVEKGFRDILGKGPIADYPVVGTRIELLDGSYHDVDSSEKAFYTAAQGCFREYFKQAAPKLLEPIMSVEIEVPEEFQGTVTGDVIRRRGLMTSNDTNEGMTVILAEVPLAETFGYATDLRSMTQGQGTFTMELAAYRQTPSNIQEEIIAERKKDELAGAR.

Residues 4–279 (EKVRNIGISA…AVTQYLPSPL (276 aa)) form the tr-type G domain. GTP-binding positions include 13–20 (AHIDSGKT), 79–83 (DTPGH), and 133–136 (NKMD).

This sequence belongs to the TRAFAC class translation factor GTPase superfamily. Classic translation factor GTPase family. EF-G/EF-2 subfamily.

The protein localises to the cytoplasm. Its function is as follows. Catalyzes the GTP-dependent ribosomal translocation step during translation elongation. During this step, the ribosome changes from the pre-translocational (PRE) to the post-translocational (POST) state as the newly formed A-site-bound peptidyl-tRNA and P-site-bound deacylated tRNA move to the P and E sites, respectively. Catalyzes the coordinated movement of the two tRNA molecules, the mRNA and conformational changes in the ribosome. The protein is Elongation factor G of Rhodopirellula baltica (strain DSM 10527 / NCIMB 13988 / SH1).